The chain runs to 396 residues: Pectate lyase 5 (396 aa).

The first 25 residues, 1–25 (MGIKHCCYILYFTLALVTLLQPVRS), serve as a signal peptide directing secretion. Residue Asn36 is glycosylated (N-linked (GlcNAc...) asparagine). Cys53 and Cys70 form a disulfide bridge. Ca(2+) is bound by residues Asp193, Asp217, and Asp221. The active site involves Arg273.

The protein belongs to the polysaccharide lyase 1 family. Amb a subfamily. Monomer. Ca(2+) is required as a cofactor. The N-terminus is blocked. As to expression, pollen and flowers.

The catalysed reaction is Eliminative cleavage of (1-&gt;4)-alpha-D-galacturonan to give oligosaccharides with 4-deoxy-alpha-D-galact-4-enuronosyl groups at their non-reducing ends.. It participates in glycan metabolism; pectin degradation; 2-dehydro-3-deoxy-D-gluconate from pectin: step 2/5. In terms of biological role, has pectate lyase activity. The protein is Pectate lyase 5 of Ambrosia artemisiifolia (Common ragweed).